Consider the following 98-residue polypeptide: Small ribosomal subunit protein uS19 (98 aa).

A disordered region spans residues 77–98 (TRTYRGHAGGKSEKGGSAPRKK).

The protein belongs to the universal ribosomal protein uS19 family.

Functionally, protein S19 forms a complex with S13 that binds strongly to the 16S ribosomal RNA. This Chlorobium phaeobacteroides (strain BS1) protein is Small ribosomal subunit protein uS19.